The following is a 518-amino-acid chain: ETHYLENE INSENSITIVE 3-like 2 protein (518 aa).

A coiled-coil region spans residues 37–73 (DDLSSDEEMEIEELEKKIWRDKQRLKRLKEMAKNGLG). Residues 450 to 518 (FNHPNDLYRP…GQELPTSWIQ (69 aa)) form a disordered region. Composition is skewed to polar residues over residues 475–484 (PSPSTLNQNL) and 500–518 (GTENNLHNQGQELPTSWIQ).

It belongs to the EIN3 family. As to quaternary structure, acts as a homodimer to bind the primary ethylene response element.

The protein localises to the nucleus. Probable transcription factor acting as a positive regulator in the ethylene response pathway. Could bind the primary ethylene response element present in the ETHYLENE-RESPONSE-FACTOR1 promoter. This chain is ETHYLENE INSENSITIVE 3-like 2 protein (EIL2), found in Arabidopsis thaliana (Mouse-ear cress).